The primary structure comprises 149 residues: Transcriptional repressor NrdR (149 aa).

A zinc finger spans residues 3–33; the sequence is CPFCSSEDTKVVDSRTTIDGSTKRRRECNNC. Positions 48 to 138 constitute an ATP-cone domain; it reads IYVVKKDNRR…VYKEFDDIKS (91 aa).

It belongs to the NrdR family. Zn(2+) is required as a cofactor.

Its function is as follows. Negatively regulates transcription of bacterial ribonucleotide reductase nrd genes and operons by binding to NrdR-boxes. This chain is Transcriptional repressor NrdR, found in Fusobacterium nucleatum subsp. nucleatum (strain ATCC 25586 / DSM 15643 / BCRC 10681 / CIP 101130 / JCM 8532 / KCTC 2640 / LMG 13131 / VPI 4355).